The following is a 140-amino-acid chain: 3-hydroxyacyl-[acyl-carrier-protein] dehydratase FabZ (140 aa).

H47 is a catalytic residue.

This sequence belongs to the thioester dehydratase family. FabZ subfamily.

It is found in the cytoplasm. It catalyses the reaction a (3R)-hydroxyacyl-[ACP] = a (2E)-enoyl-[ACP] + H2O. In terms of biological role, involved in unsaturated fatty acids biosynthesis. Catalyzes the dehydration of short chain beta-hydroxyacyl-ACPs and long chain saturated and unsaturated beta-hydroxyacyl-ACPs. This chain is 3-hydroxyacyl-[acyl-carrier-protein] dehydratase FabZ, found in Streptococcus sanguinis (strain SK36).